A 30-amino-acid polypeptide reads, in one-letter code: Cyclotide mden-G (30 aa).

Residues 1–30 (GIPCAESCVYIPCITAALGCSCKNKVCYRN) constitute a cross-link (cyclopeptide (Gly-Asn)). 3 disulfide bridges follow: Cys-4–Cys-20, Cys-8–Cys-22, and Cys-13–Cys-27.

It belongs to the cyclotide family. Bracelet subfamily. In terms of processing, this is a cyclic peptide.

Its function is as follows. Probably participates in a plant defense mechanism. The polypeptide is Cyclotide mden-G (Melicytus dentatus (Tree violet)).